The chain runs to 296 residues: Glycine--tRNA ligase alpha subunit (296 aa).

This sequence belongs to the class-II aminoacyl-tRNA synthetase family. In terms of assembly, tetramer of two alpha and two beta subunits.

Its subcellular location is the cytoplasm. It carries out the reaction tRNA(Gly) + glycine + ATP = glycyl-tRNA(Gly) + AMP + diphosphate. This Synechococcus sp. (strain CC9605) protein is Glycine--tRNA ligase alpha subunit.